Here is a 251-residue protein sequence, read N- to C-terminus: Large ribosomal subunit protein uL3 (251 aa).

An N5-methylglutamine modification is found at Gln-151. Positions 221–251 are disordered; sequence GLKQAANSNDSAAADTPAEVAAVEATEGQEG. Low complexity predominate over residues 225–251; the sequence is AANSNDSAAADTPAEVAAVEATEGQEG.

It belongs to the universal ribosomal protein uL3 family. Part of the 50S ribosomal subunit. Forms a cluster with proteins L14 and L19. Post-translationally, methylated by PrmB.

Functionally, one of the primary rRNA binding proteins, it binds directly near the 3'-end of the 23S rRNA, where it nucleates assembly of the 50S subunit. The sequence is that of Large ribosomal subunit protein uL3 from Novosphingobium aromaticivorans (strain ATCC 700278 / DSM 12444 / CCUG 56034 / CIP 105152 / NBRC 16084 / F199).